The sequence spans 239 residues: BURP domain-containing protein 6 (239 aa).

The N-terminal stretch at 1–19 (MPGAIRDLINPVSSAASAS) is a signal peptide. Positions 28 to 239 (FFLEKDLFPG…PQDDMLWVRN (212 aa)) constitute a BURP domain.

Expressed in leaves and shoot.

This chain is BURP domain-containing protein 6 (BURP6), found in Oryza sativa subsp. japonica (Rice).